Reading from the N-terminus, the 131-residue chain is Ribonuclease VapC13 (131 aa).

A PINc domain is found at 2-128; it reads ILVDSNIPMY…RGFDSYPGIK (127 aa). Asp-5 and Asp-99 together coordinate Mg(2+).

It belongs to the PINc/VapC protein family. Mg(2+) serves as cofactor.

It is found in the secreted. Its function is as follows. Toxic component of a type II toxin-antitoxin (TA) system. An RNase. The cognate antitoxin is VapB13. The sequence is that of Ribonuclease VapC13 from Mycobacterium tuberculosis (strain ATCC 25618 / H37Rv).